We begin with the raw amino-acid sequence, 389 residues long: Elongation factor Tu-3 (389 aa).

The region spanning lysine 10–glutamate 203 is the tr-type G domain. A G1 region spans residues glycine 19–threonine 26. GTP is bound at residue glycine 19–threonine 26. Mg(2+) is bound at residue threonine 26. The interval glycine 60 to asparagine 64 is G2. Residues aspartate 81–glycine 84 are G3. GTP contacts are provided by residues aspartate 81 to histidine 85 and asparagine 136 to aspartate 139. The G4 stretch occupies residues asparagine 136–aspartate 139. Residues serine 173–leucine 175 are G5.

This sequence belongs to the TRAFAC class translation factor GTPase superfamily. Classic translation factor GTPase family. EF-Tu/EF-1A subfamily. Monomer.

It localises to the cytoplasm. The catalysed reaction is GTP + H2O = GDP + phosphate + H(+). Functionally, GTP hydrolase that promotes the GTP-dependent binding of aminoacyl-tRNA to the A-site of ribosomes during protein biosynthesis. The chain is Elongation factor Tu-3 from Streptomyces ramocissimus.